The following is a 266-amino-acid chain: Interleukin-1 beta (266 aa).

The propeptide occupies 1 to 113; that stretch reads MATVPEPINE…ETSSDELLCD (113 aa).

The protein belongs to the IL-1 family. As to quaternary structure, monomer. In its precursor form, weakly interacts with full-length MEFV; the mature cytokine does not interact at all. Interacts with integrins ITGAV:ITGBV and ITGA5:ITGB1; integrin-binding is required for IL1B signaling. Interacts with cargo receptor TMED10; the interaction is direct and is required for the secretion of IL1B mature form. Interacts with HSP90AB1; the interaction facilitates cargo translocation into the ERGIC. Interacts with HSP90B1; the interaction facilitates cargo translocation into the ERGIC.

The protein localises to the cytoplasm. The protein resides in the cytosol. It localises to the secreted. Its subcellular location is the lysosome. It is found in the extracellular exosome. In terms of biological role, potent pro-inflammatory cytokine. Initially discovered as the major endogenous pyrogen, induces prostaglandin synthesis, neutrophil influx and activation, T-cell activation and cytokine production, B-cell activation and antibody production, and fibroblast proliferation and collagen production. Promotes Th17 differentiation of T-cells. Synergizes with IL12/interleukin-12 to induce IFNG synthesis from T-helper 1 (Th1) cells. Plays a role in angiogenesis by inducing VEGF production synergistically with TNF and IL6. Involved in transduction of inflammation downstream of pyroptosis: its mature form is specifically released in the extracellular milieu by passing through the gasdermin-D (GSDMD) pore. This is Interleukin-1 beta (IL1B) from Capra hircus (Goat).